The sequence spans 739 residues: Elongation factor 2 (739 aa).

The tr-type G domain maps to 19–261; the sequence is RNIRNIGIIA…MVALHVPDPI (243 aa). GTP contacts are provided by residues 28–35, 94–98, and 148–151; these read AHVDHGKT, DTPGH, and NKID. His603 is modified (diphthamide).

Belongs to the TRAFAC class translation factor GTPase superfamily. Classic translation factor GTPase family. EF-G/EF-2 subfamily.

Its subcellular location is the cytoplasm. In terms of biological role, catalyzes the GTP-dependent ribosomal translocation step during translation elongation. During this step, the ribosome changes from the pre-translocational (PRE) to the post-translocational (POST) state as the newly formed A-site-bound peptidyl-tRNA and P-site-bound deacylated tRNA move to the P and E sites, respectively. Catalyzes the coordinated movement of the two tRNA molecules, the mRNA and conformational changes in the ribosome. This is Elongation factor 2 from Korarchaeum cryptofilum (strain OPF8).